The following is a 199-amino-acid chain: Probable GTP-binding protein EngB (199 aa).

Residues 22–195 (QLPEIALSGR…WEWIEQQCDI (174 aa)) form the EngB-type G domain. Residues 30–37 (GRSNVGKS), 57–61 (GKTQT), 75–78 (DVPG), 142–145 (TKMD), and 174–176 (FSA) contribute to the GTP site. Ser37 and Thr59 together coordinate Mg(2+).

Belongs to the TRAFAC class TrmE-Era-EngA-EngB-Septin-like GTPase superfamily. EngB GTPase family. Mg(2+) is required as a cofactor.

Functionally, necessary for normal cell division and for the maintenance of normal septation. This chain is Probable GTP-binding protein EngB, found in Latilactobacillus sakei subsp. sakei (strain 23K) (Lactobacillus sakei subsp. sakei).